A 357-amino-acid chain; its full sequence is Putative electron transport protein YccM (357 aa).

The Cytoplasmic segment spans residues 1-36; it reads MAENKRTRWQRRPGTTGGKLPWNDWRNATTWRKATQ. Residues 37–54 form a helical membrane-spanning segment; that stretch reads LLLLAMNIYIAITFWYWV. Topologically, residues 55 to 91 are periplasmic; it reads RYYETASSTTFVARPGGIEGWLPIAGLMNLKYSLVTG. The chain crosses the membrane as a helical span at residues 92–114; that stretch reads QLPSVHAAAMLLLVAFIVISLLL. The Cytoplasmic portion of the chain corresponds to 115–158; that stretch reads KKAFCSWLCPVGTLSELIGDLGNKLFGRQCVLPRWLDIPLRGVK. A helical transmembrane segment spans residues 159–181; that stretch reads YLLLSFFIYIALLMPAQAIHYFM. Residues 182–195 are Periplasmic-facing; it reads LSPYSVVMDVKMLD. The chain crosses the membrane as a helical span at residues 196–218; sequence FFRHMGTATLISVTVLLIASLFI. Topologically, residues 219-309 are cytoplasmic; sequence RHAWCRYLCP…KPAANKKAFA (91 aa). 4Fe-4S ferredoxin-type domains lie at 242–270 and 269–299; these read FKIRRNAESCIDCGKCAKNCPSRIPVDKL and KLIQVRTVECTGCMTCVESCPVASTLTFSLQ. [4Fe-4S] cluster is bound by residues C251, C254, C257, C261, C278, C281, C284, and C288. A helical membrane pass occupies residues 310 to 332; it reads LSGWLMTLLVLGIMFAVIGYAMY. The Periplasmic segment spans residues 333 to 357; it reads AGVWQSPVPEELYRRLIPQAPMIGH.

It is found in the cell inner membrane. In Escherichia coli (strain K12), this protein is Putative electron transport protein YccM (yccM).